Reading from the N-terminus, the 141-residue chain is Hemoglobin subunit alpha-1 (141 aa).

The Globin domain maps to 1–141; the sequence is VLTEDDKNHI…VAKTLVAHYR (141 aa). Histidine 58 is an O2 binding site. Histidine 87 provides a ligand contact to heme b.

Belongs to the globin family. In terms of assembly, heterotetramer of two alpha chains and two beta chains. Red blood cells.

Functionally, involved in oxygen transport from the lung to the various peripheral tissues. This is Hemoglobin subunit alpha-1 from Iguana iguana (Common iguana).